The sequence spans 236 residues: 2-C-methyl-D-erythritol 4-phosphate cytidylyltransferase (236 aa).

This sequence belongs to the IspD/TarI cytidylyltransferase family. IspD subfamily. In terms of assembly, homodimer.

The catalysed reaction is 2-C-methyl-D-erythritol 4-phosphate + CTP + H(+) = 4-CDP-2-C-methyl-D-erythritol + diphosphate. The protein operates within isoprenoid biosynthesis; isopentenyl diphosphate biosynthesis via DXP pathway; isopentenyl diphosphate from 1-deoxy-D-xylulose 5-phosphate: step 2/6. Functionally, catalyzes the formation of 4-diphosphocytidyl-2-C-methyl-D-erythritol from CTP and 2-C-methyl-D-erythritol 4-phosphate (MEP). The polypeptide is 2-C-methyl-D-erythritol 4-phosphate cytidylyltransferase (Escherichia coli O127:H6 (strain E2348/69 / EPEC)).